The chain runs to 682 residues: Probable xyloglucan glycosyltransferase 6 (682 aa).

2 consecutive transmembrane segments (helical) span residues 109–129 (LIKG…AAYF) and 173–193 (IVLF…CFWI). D260 is a catalytic residue. Substrate is bound by residues D319 and D321. D413 is a catalytic residue. Helical transmembrane passes span 491–511 (LILP…TMFF) and 516–536 (LPSW…IIPA). S608 carries the phosphoserine modification. 2 consecutive transmembrane segments (helical) span residues 632–651 (LYRT…VRSL) and 657–677 (IHFY…LDLI).

This sequence belongs to the glycosyltransferase 2 family. Plant cellulose synthase-like C subfamily. As to quaternary structure, homodimer. Mainly expressed in flowers and seeds, and, to a lower extent, in seedlings, roots, leaves and stems.

It localises to the golgi apparatus membrane. Its function is as follows. Probable beta-1,4-glucan synthase rather involved in the synthesis of the xyloglucan backbone than cellulose. Seems to work simultaneously with xyloglucan 6-xylosyltransferase. Xyloglucan is a noncellulosic polysaccharides of plant cell wall and consists of a glucan backbone substituted by xylose, galactose and fucose. This chain is Probable xyloglucan glycosyltransferase 6, found in Arabidopsis thaliana (Mouse-ear cress).